Here is a 65-residue protein sequence, read N- to C-terminus: Sec-independent protein translocase protein TatA (65 aa).

Residues 9–29 (ILIIVLLVVVVFGIGKLPQVG) form a helical membrane-spanning segment. The tract at residues 43–65 (SSGEEEKEEVETKEETKTIEKSE) is disordered. Residues 45–54 (GEEEKEEVET) are compositionally biased toward acidic residues. The segment covering 55-65 (KEETKTIEKSE) has biased composition (basic and acidic residues).

This sequence belongs to the TatA/E family. Forms a complex with TatC.

It localises to the cell membrane. Functionally, part of the twin-arginine translocation (Tat) system that transports large folded proteins containing a characteristic twin-arginine motif in their signal peptide across membranes. TatA could form the protein-conducting channel of the Tat system. The sequence is that of Sec-independent protein translocase protein TatA from Dehalococcoides mccartyi (strain ATCC BAA-2266 / KCTC 15142 / 195) (Dehalococcoides ethenogenes (strain 195)).